The primary structure comprises 95 residues: Neutrophil antibiotic peptide NP-5 (95 aa).

The N-terminal stretch at 1-19 (MRTLALLAAILLVTLQAQA) is a signal peptide. The propeptide occupies 20–62 (ELHSGMADDGVDQQQPRAQDLDVAVYIKQDETSPLEVLGAKAG). Intrachain disulfides connect Cys65/Cys93, Cys67/Cys82, and Cys72/Cys92.

It belongs to the alpha-defensin family.

It is found in the secreted. In terms of biological role, microbicidal activity. The sequence is that of Neutrophil antibiotic peptide NP-5 from Oryctolagus cuniculus (Rabbit).